The sequence spans 135 residues: Transcriptional activator protein (135 aa).

The Nuclear localization signal motif lies at 17 to 32 (KIQHHIAKKRQVRRRR). A zinc finger spans residues 37–54 (CGCSYYIHLDCINHGFTH). The interval 120–135 (HLDDLTVSDWSFFKSL) is transactivation.

The protein belongs to the geminiviridae transcriptional activator protein family. As to quaternary structure, monomer. Homodimer. Homooligomer. Self-interaction correlates with nuclear localization and efficient activation of transcription. Monomers suppress local silencing by interacting with and inactivating host adenosine kinase 2 (ADK2) in the cytoplasm. Interacts with and inhibits host SNF1 kinase. Binds to ssDNA. Post-translationally, phosphorylated.

It is found in the host nucleus. The protein localises to the host cytoplasm. Strong activator of the late viral genes promoters. Acts as a suppressor of RNA-mediated gene silencing, also known as post-transcriptional gene silencing (PTGS), a mechanism of plant viral defense that limits the accumulation of viral RNAs. TrAP suppresses the host RNA silencing by inhibiting adenosine kinase 2 (ADK2), a kinase involved in a general methylation pathway. Also suppresses the host basal defense by interacting with and inhibiting SNF1 kinase, a key regulator of cell metabolism implicated in innate antiviral defense. Determines pathogenicity. The protein is Transcriptional activator protein of Tomato yellow leaf curl Sardinia virus (isolate Spain-2) (TYLCSV).